A 94-amino-acid chain; its full sequence is Large ribosomal subunit protein uL23 (94 aa).

Belongs to the universal ribosomal protein uL23 family. In terms of assembly, part of the 50S ribosomal subunit. Contacts protein L29, and trigger factor when it is bound to the ribosome.

In terms of biological role, one of the early assembly proteins it binds 23S rRNA. One of the proteins that surrounds the polypeptide exit tunnel on the outside of the ribosome. Forms the main docking site for trigger factor binding to the ribosome. The chain is Large ribosomal subunit protein uL23 from Ligilactobacillus salivarius (strain UCC118) (Lactobacillus salivarius).